We begin with the raw amino-acid sequence, 248 residues long: ATP synthase subunit a, chloroplastic (248 aa).

5 helical membrane passes run 35 to 55 (GQVF…SFLG), 94 to 114 (VPYI…GALI), 133 to 153 (INTT…AGLS), 202 to 222 (VFTL…GLFA), and 224 to 244 (SIQA…AMEG).

Belongs to the ATPase A chain family. F-type ATPases have 2 components, CF(1) - the catalytic core - and CF(0) - the membrane proton channel. CF(1) has five subunits: alpha(3), beta(3), gamma(1), delta(1), epsilon(1). CF(0) has four main subunits: a, b, b' and c.

The protein resides in the plastid. It localises to the chloroplast thylakoid membrane. Key component of the proton channel; it plays a direct role in the translocation of protons across the membrane. In Pyropia yezoensis (Susabi-nori), this protein is ATP synthase subunit a, chloroplastic.